Reading from the N-terminus, the 131-residue chain is Small ribosomal subunit protein uS8 (131 aa).

The protein belongs to the universal ribosomal protein uS8 family. As to quaternary structure, part of the 30S ribosomal subunit. Contacts proteins S5 and S12.

In terms of biological role, one of the primary rRNA binding proteins, it binds directly to 16S rRNA central domain where it helps coordinate assembly of the platform of the 30S subunit. This Prosthecochloris aestuarii (strain DSM 271 / SK 413) protein is Small ribosomal subunit protein uS8.